The following is a 441-amino-acid chain: Serine carboxypeptidase-like 1 (441 aa).

The first 29 residues, 1-29, serve as a signal peptide directing secretion; that stretch reads MANKYVSSVLKSLLVLLHLVFLSKQHVDS. 3 disulfide bridges follow: Cys-88–Cys-331, Cys-252–Cys-266, and Cys-290–Cys-297. N-linked (GlcNAc...) asparagine glycosylation is present at Asn-109. Ser-184 is a catalytic residue. N-linked (GlcNAc...) asparagine glycosylation is present at Asn-350. Asp-366 is an active-site residue. Asn-382 carries an N-linked (GlcNAc...) asparagine glycan. His-419 is an active-site residue.

It belongs to the peptidase S10 family. As to expression, expressed in seedlings and roots.

Its subcellular location is the secreted. Probable carboxypeptidase. The protein is Serine carboxypeptidase-like 1 (SCPL1) of Arabidopsis thaliana (Mouse-ear cress).